Consider the following 413-residue polypeptide: Multifunctional CCA protein (413 aa).

Positions 8 and 11 each coordinate ATP. Residues G8 and R11 each contribute to the CTP site. Mg(2+) contacts are provided by D21 and D23. ATP contacts are provided by R91, R137, and R140. Residues R91, R137, and R140 each contribute to the CTP site. The region spanning 228–329 is the HD domain; it reads TGVHTLMTLS…VKLFDAIDAW (102 aa).

This sequence belongs to the tRNA nucleotidyltransferase/poly(A) polymerase family. Bacterial CCA-adding enzyme type 1 subfamily. In terms of assembly, monomer. Can also form homodimers and oligomers. Requires Mg(2+) as cofactor. It depends on Ni(2+) as a cofactor.

The catalysed reaction is a tRNA precursor + 2 CTP + ATP = a tRNA with a 3' CCA end + 3 diphosphate. It catalyses the reaction a tRNA with a 3' CCA end + 2 CTP + ATP = a tRNA with a 3' CCACCA end + 3 diphosphate. Its function is as follows. Catalyzes the addition and repair of the essential 3'-terminal CCA sequence in tRNAs without using a nucleic acid template. Adds these three nucleotides in the order of C, C, and A to the tRNA nucleotide-73, using CTP and ATP as substrates and producing inorganic pyrophosphate. tRNA 3'-terminal CCA addition is required both for tRNA processing and repair. Also involved in tRNA surveillance by mediating tandem CCA addition to generate a CCACCA at the 3' terminus of unstable tRNAs. While stable tRNAs receive only 3'-terminal CCA, unstable tRNAs are marked with CCACCA and rapidly degraded. This is Multifunctional CCA protein from Salmonella choleraesuis (strain SC-B67).